A 146-amino-acid chain; its full sequence is MRVVLQRSKEASVTVDGEIVGQIPFGLTLLVGITHEDTEKDATYIAEKIANLRIFEDESGKMNHSVLDMKGQVLSISQFTLYGDCRKGRRPNFMDAAKPDYAEHLYDFFNEEVRKQGLHVETGQFGAMMDVSLINDGPVTLIVESK.

Residues 137–138 (GP) carry the Gly-cisPro motif, important for rejection of L-amino acids motif.

It belongs to the DTD family. Homodimer.

It is found in the cytoplasm. The enzyme catalyses glycyl-tRNA(Ala) + H2O = tRNA(Ala) + glycine + H(+). It carries out the reaction a D-aminoacyl-tRNA + H2O = a tRNA + a D-alpha-amino acid + H(+). An aminoacyl-tRNA editing enzyme that deacylates mischarged D-aminoacyl-tRNAs. Also deacylates mischarged glycyl-tRNA(Ala), protecting cells against glycine mischarging by AlaRS. Acts via tRNA-based rather than protein-based catalysis; rejects L-amino acids rather than detecting D-amino acids in the active site. By recycling D-aminoacyl-tRNA to D-amino acids and free tRNA molecules, this enzyme counteracts the toxicity associated with the formation of D-aminoacyl-tRNA entities in vivo and helps enforce protein L-homochirality. The protein is D-aminoacyl-tRNA deacylase of Bacillus mycoides (strain KBAB4) (Bacillus weihenstephanensis).